A 689-amino-acid chain; its full sequence is Glycine--tRNA ligase beta subunit (689 aa).

Belongs to the class-II aminoacyl-tRNA synthetase family. As to quaternary structure, tetramer of two alpha and two beta subunits.

It localises to the cytoplasm. The catalysed reaction is tRNA(Gly) + glycine + ATP = glycyl-tRNA(Gly) + AMP + diphosphate. This is Glycine--tRNA ligase beta subunit from Pseudoalteromonas translucida (strain TAC 125).